Reading from the N-terminus, the 1724-residue chain is Protein scribble homolog (1724 aa).

A sufficient for targeting to adherens junction region spans residues M1–E821. LRR repeat units follow at residues N11–Y34, N35–L58, H59–F81, Q83–Q105, L107–L127, R128–L150, S151–V174, L176–L196, P197–L219, Q221–L242, A244–L265, K266–C288, E289–L311, K312–C334, S336–A357, E359–L380, and L382–Q405. Disordered stretches follow at residues R451–M484, Y496–T620, and S646–F683. Residues S518 to T534 are compositionally biased toward low complexity. Acidic residues predominate over residues V554–Y567. Positions F574 to G583 are enriched in basic and acidic residues. A compositionally biased stretch (acidic residues) spans D584–R598. The segment covering E611–T620 has biased composition (basic and acidic residues). Residues R661–D678 are compositionally biased toward acidic residues. 4 PDZ domains span residues T731 to R818, A867 to Q955, E1005 to P1094, and E1101 to F1193. The interval Q955–C995 is disordered. Disordered stretches follow at residues L1283–K1407, K1414–L1433, R1449–V1468, and S1488–A1555. Residues F1295–H1306 are compositionally biased toward basic and acidic residues. 3 stretches are compositionally biased toward polar residues: residues P1308 to T1329, P1346 to P1357, and P1364 to S1385. The segment covering H1395–K1407 has biased composition (basic and acidic residues). A coiled-coil region spans residues E1430–E1461. Positions L1453–D1463 are enriched in acidic residues. Polar residues predominate over residues G1490–T1506. The span at P1507 to S1518 shows a compositional bias: low complexity. Basic and acidic residues predominate over residues G1521–Q1538. S1609 carries the phosphoserine modification. The tract at residues I1621 to V1684 is disordered. A compositionally biased stretch (basic and acidic residues) spans K1623 to T1632.

In terms of processing, palmitoylated.

It localises to the cell membrane. The protein resides in the cell junction. The protein localises to the adherens junction. It is found in the cell projection. Its subcellular location is the lamellipodium. It localises to the cytoplasm. The protein resides in the postsynapse. The protein localises to the presynapse. Functionally, scaffold protein involved in different aspects of polarized cells differentiation regulating epithelial and neuronal morphogenesis. Regulates the caudal migration of the nVII motor neurons. Required for convergent extension movements during gastrulation. In Danio rerio (Zebrafish), this protein is Protein scribble homolog (scrib).